Reading from the N-terminus, the 575-residue chain is Serine/threonine-protein kinase YPK1 (575 aa).

Positions 1-53 (MMSWKFGKKFKEGGFLSGKHHSSNNNSPSDTSRSTTPTPGNPHPEDAVKPPVP) are disordered. The span at 23 to 38 (SNNNSPSDTSRSTTPT) shows a compositional bias: low complexity. In terms of domain architecture, Protein kinase spans 245–500 (FELLKVIGKG…AQDIKNHPFF (256 aa)). ATP is bound by residues 251-259 (IGKGSFGKV) and Lys274. Catalysis depends on Asp368, which acts as the Proton acceptor. One can recognise an AGC-kinase C-terminal domain in the interval 502–573 (KHINFTKLWN…SVSPLGESVG (72 aa)). Phosphoserine is present on residues Ser543 and Ser562.

It belongs to the protein kinase superfamily. AGC Ser/Thr protein kinase family. RAC subfamily.

It carries out the reaction L-seryl-[protein] + ATP = O-phospho-L-seryl-[protein] + ADP + H(+). It catalyses the reaction L-threonyl-[protein] + ATP = O-phospho-L-threonyl-[protein] + ADP + H(+). Its function is as follows. Probable serine/threonine-protein kinase which may act in the sphingolipid-mediated signaling pathway. May act downstream of TORC2 (TOR complex 2) and PDK1 to regulate sphingolipid metabolism. This is Serine/threonine-protein kinase YPK1 from Cryptococcus neoformans var. grubii serotype A (strain H99 / ATCC 208821 / CBS 10515 / FGSC 9487) (Filobasidiella neoformans var. grubii).